A 372-amino-acid chain; its full sequence is Putative glutamate--cysteine ligase 2 (372 aa).

It belongs to the glutamate--cysteine ligase type 2 family. YbdK subfamily. As to quaternary structure, homodimer.

The catalysed reaction is L-cysteine + L-glutamate + ATP = gamma-L-glutamyl-L-cysteine + ADP + phosphate + H(+). Functionally, ATP-dependent carboxylate-amine ligase which exhibits weak glutamate--cysteine ligase activity. This is Putative glutamate--cysteine ligase 2 (ybdK) from Salmonella arizonae (strain ATCC BAA-731 / CDC346-86 / RSK2980).